Here is a 298-residue protein sequence, read N- to C-terminus: Zinc import ATP-binding protein ZnuC (298 aa).

Residues 17–232 (IELRNAGVYR…PEYVRLFGSR (216 aa)) enclose the ABC transporter domain. 49 to 56 (GPNGAGKS) provides a ligand contact to ATP. The segment at 273–298 (RGHCHVEDGHHHDHEHHHHEGGQPRA) is disordered. Positions 276–298 (CHVEDGHHHDHEHHHHEGGQPRA) are enriched in basic and acidic residues.

It belongs to the ABC transporter superfamily. Zinc importer (TC 3.A.1.15.5) family. As to quaternary structure, the complex is composed of two ATP-binding proteins (ZnuC), two transmembrane proteins (ZnuB) and a solute-binding protein (ZnuA).

The protein resides in the cell inner membrane. The catalysed reaction is Zn(2+)(out) + ATP(in) + H2O(in) = Zn(2+)(in) + ADP(in) + phosphate(in) + H(+)(in). In terms of biological role, part of the ABC transporter complex ZnuABC involved in zinc import. Responsible for energy coupling to the transport system. The chain is Zinc import ATP-binding protein ZnuC from Brucella abortus (strain 2308).